A 125-amino-acid polypeptide reads, in one-letter code: Subtelomeric hrmA-associated cluster protein cgnA (125 aa).

G-Q-I/R/S repeat units follow at residues Gly11–Ile13, Gly14–Ile16, Gly17–Arg19, Gly20–Ser22, Gly23–Arg25, Gly26–Ser28, Gly29–Arg31, Gly32–Ser34, Gly35–Ile37, Gly38–Ser40, Gly41–Ser43, Gly44–Ser46, Gly47–Ser49, Gly50–Ser52, Gly53–Ile55, Gly56–Ile58, Gly59–Ile61, Gly62–Ile64, Gly65–Ile67, Gly68–Ile70, Gly71–Ile73, Gly74–Ile76, and Gly77–Ala79. Positions Gly11–Ala79 are 23 X 3 AA approximate tandem repeats of G-Q-I/R/S. Positions Pro15–Gln57 are disordered.

It localises to the secreted. Its function is as follows. Hypoxia responsive morphology factor that modulates the expression of the subtelomeric hrmA-associated cluster (HAC) containing genes that alter the hyphal surface (such as reduced total chitin or increased beta-glucan exposure) and perturb inter-hyphal interactions within the developing biofilms, resulting in a loss of vertically aligned polarized growing filaments. Consequently, this hypoxia-typic morphotype (called H-MORPH) with altered biofilm architecture leads to increased hypoxia fitness, increased host inflammation, rapid disease progression, and mortality in a murine model of invasive aspergillosis. GcnA is directly involved in the reduction total surface chitin and the increase beta-glucan exposure, and mediates the detachment of the extracellular matrix and especially of its component galactosaminogalactan (GAG). The chain is Subtelomeric hrmA-associated cluster protein cgnA from Aspergillus fumigatus (strain CBS 144.89 / FGSC A1163 / CEA10) (Neosartorya fumigata).